Consider the following 141-residue polypeptide: Aspartate 1-decarboxylase 1 (141 aa).

Ser-25 acts as the Schiff-base intermediate with substrate; via pyruvic acid in catalysis. Ser-25 is subject to Pyruvic acid (Ser). Residue Thr-57 participates in substrate binding. Tyr-58 (proton donor) is an active-site residue. 73 to 75 (GPA) lines the substrate pocket.

It belongs to the PanD family. As to quaternary structure, heterooctamer of four alpha and four beta subunits. Pyruvate serves as cofactor. Post-translationally, is synthesized initially as an inactive proenzyme, which is activated by self-cleavage at a specific serine bond to produce a beta-subunit with a hydroxyl group at its C-terminus and an alpha-subunit with a pyruvoyl group at its N-terminus.

Its subcellular location is the cytoplasm. It carries out the reaction L-aspartate + H(+) = beta-alanine + CO2. Its pathway is cofactor biosynthesis; (R)-pantothenate biosynthesis; beta-alanine from L-aspartate: step 1/1. Catalyzes the pyruvoyl-dependent decarboxylation of aspartate to produce beta-alanine. The sequence is that of Aspartate 1-decarboxylase 1 from Paenarthrobacter aurescens (strain TC1).